The following is a 298-amino-acid chain: GTP-binding protein REM 1 (298 aa).

The segment at M1 to S73 is disordered. Residues T35–P55 are compositionally biased toward polar residues. S51 carries the post-translational modification Phosphoserine. Over residues P63–S73 the composition is skewed to low complexity. Residues G87 to T94 and N195 to D198 each bind GTP. Residues A268–A287 form a calmodulin-binding region.

The protein belongs to the small GTPase superfamily. RGK family. In terms of assembly, in vitro, interacts with calmodulin in a calcium-dependent manner. As to expression, most highly expressed in the endothelial lining of the blood vessels in uterus and heart. Lower levels found in spleen, lymph node, kidney and testis. Also found in cells with secretory function such as the islets of Langerhans, lobule/duct epithelium in the breast, bile duct epithelium in the liver, surface epithelium in the endometrial glands of the uterus, colon mucosa and acinar cells in the pancreas and the prostate.

In terms of biological role, promotes endothelial cell sprouting and actin cytoskeletal reorganization. May be involved in angiogenesis. May function in Ca(2+) signaling. This Homo sapiens (Human) protein is GTP-binding protein REM 1 (REM1).